The chain runs to 154 residues: Myoglobin (154 aa).

One can recognise a Globin domain in the interval 2–148; it reads GLSDGEWQLV…FRNDIAAKYK (147 aa). Position 4 is a phosphoserine (Ser4). Residue His65 participates in nitrite binding. An O2-binding site is contributed by His65. Thr68 bears the Phosphothreonine mark. His94 is a binding site for heme b.

Belongs to the globin family. Monomeric.

It localises to the cytoplasm. The protein resides in the sarcoplasm. The catalysed reaction is Fe(III)-heme b-[protein] + nitric oxide + H2O = Fe(II)-heme b-[protein] + nitrite + 2 H(+). It carries out the reaction H2O2 + AH2 = A + 2 H2O. Functionally, monomeric heme protein which primary function is to store oxygen and facilitate its diffusion within muscle tissues. Reversibly binds oxygen through a pentacoordinated heme iron and enables its timely and efficient release as needed during periods of heightened demand. Depending on the oxidative conditions of tissues and cells, and in addition to its ability to bind oxygen, it also has a nitrite reductase activity whereby it regulates the production of bioactive nitric oxide. Under stress conditions, like hypoxia and anoxia, it also protects cells against reactive oxygen species thanks to its pseudoperoxidase activity. The sequence is that of Myoglobin (MB) from Meles meles (Eurasian badger).